The chain runs to 155 residues: Endoribonuclease YbeY (155 aa).

Positions 114, 118, and 124 each coordinate Zn(2+).

It belongs to the endoribonuclease YbeY family. The cofactor is Zn(2+).

The protein localises to the cytoplasm. Functionally, single strand-specific metallo-endoribonuclease involved in late-stage 70S ribosome quality control and in maturation of the 3' terminus of the 16S rRNA. The sequence is that of Endoribonuclease YbeY from Enterobacter sp. (strain 638).